Here is an 808-residue protein sequence, read N- to C-terminus: Phospholipase D alpha 1 (808 aa).

Residues Met-1–Val-125 form the C2 domain. A Ca(2+)-binding site is contributed by Asp-186. In terms of domain architecture, PLD phosphodiesterase 1 spans Thr-326–Arg-364. Residues His-331, Lys-333, and Asp-338 contribute to the active site. His-331 contacts a 1,2-diacyl-sn-glycero-3-phosphate. Residues His-370 and His-404 each coordinate Ca(2+). The 28-residue stretch at Phe-654–Ser-681 folds into the PLD phosphodiesterase 2 domain. Residues His-659, Lys-661, and Asp-666 contribute to the active site. His-659 is an a 1,2-diacyl-sn-glycero-3-phosphate binding site. Glu-720 lines the Ca(2+) pocket.

It belongs to the phospholipase D family. C2-PLD subfamily. Ca(2+) is required as a cofactor.

It catalyses the reaction a 1,2-diacyl-sn-glycero-3-phosphocholine + H2O = a 1,2-diacyl-sn-glycero-3-phosphate + choline + H(+). Functionally, hydrolyzes glycerol-phospholipids at the terminal phosphodiesteric bond. Plays an important role in various cellular processes. In Spuriopimpinella brachycarpa (Chamnamul), this protein is Phospholipase D alpha 1 (PLD1).